The primary structure comprises 316 residues: MENITNISEFILMGFPTAPWLQILLFSIFFITYVFVLLENLVIILTVWVTGSLHKPMYYFLSTMSFLEAWYISVTVPKMLAGFLFRPNTISFLGCMTQLYFFMSLACTECVLLAAMAYDRYVAICWPLRYPVMMTTGFCVQLTISSWVSGFTISMAKVYFISRVAFCGNNVLNHFFCDVSPILKLACMNLSMAETVDFALAIVILIFPLSATVLSYGFIVSTVLQIPSATGQRKAFSTCASHLTVVVIFYTAVIFMYVRPRAIASFNSNKLISAIYAVFTPMLNPIIYCLRNKEVKDAIRKTIAGGRAPALGESIS.

Over 1–22 the chain is Extracellular; that stretch reads MENITNISEFILMGFPTAPWLQ. N-linked (GlcNAc...) asparagine glycosylation is found at asparagine 3 and asparagine 6. A helical transmembrane segment spans residues 23–43; that stretch reads ILLFSIFFITYVFVLLENLVI. The Cytoplasmic portion of the chain corresponds to 44–64; it reads ILTVWVTGSLHKPMYYFLSTM. A helical membrane pass occupies residues 65-85; that stretch reads SFLEAWYISVTVPKMLAGFLF. At 86–97 the chain is on the extracellular side; that stretch reads RPNTISFLGCMT. A disulfide bridge links cysteine 95 with cysteine 187. The helical transmembrane segment at 98–118 threads the bilayer; the sequence is QLYFFMSLACTECVLLAAMAY. Residues 119–132 lie on the Cytoplasmic side of the membrane; that stretch reads DRYVAICWPLRYPV. A helical transmembrane segment spans residues 133 to 153; it reads MMTTGFCVQLTISSWVSGFTI. Residues 154 to 199 are Extracellular-facing; it reads SMAKVYFISRVAFCGNNVLNHFFCDVSPILKLACMNLSMAETVDFA. Residues 200-220 form a helical membrane-spanning segment; it reads LAIVILIFPLSATVLSYGFIV. The Cytoplasmic segment spans residues 221–237; that stretch reads STVLQIPSATGQRKAFS. A helical membrane pass occupies residues 238–258; that stretch reads TCASHLTVVVIFYTAVIFMYV. Residues 259–269 are Extracellular-facing; sequence RPRAIASFNSN. Residues 270–290 form a helical membrane-spanning segment; that stretch reads KLISAIYAVFTPMLNPIIYCL. Over 291-316 the chain is Cytoplasmic; it reads RNKEVKDAIRKTIAGGRAPALGESIS.

This sequence belongs to the G-protein coupled receptor 1 family. Olfactory epithelium.

It is found in the cell membrane. Odorant receptor. This chain is Olfactory receptor 6B9, found in Mus musculus (Mouse).